We begin with the raw amino-acid sequence, 363 residues long: Outer membrane protein P2 (363 aa).

Positions 1-20 are cleaved as a signal peptide; it reads MKKTLAALIVGAFAASAANA.

This sequence belongs to the Gram-negative porin family. As to quaternary structure, homotrimer.

The protein localises to the cell outer membrane. Functionally, forms pores that allow passive diffusion of small molecules across the outer membrane. The chain is Outer membrane protein P2 (ompP2) from Haemophilus influenzae.